The chain runs to 41 residues: uncharacterized protein (41 aa).

The helical transmembrane segment at 10–32 (LIILAVPFMIKTSLKTNLIFFFL) threads the bilayer.

Its subcellular location is the cell inner membrane. This is an uncharacterized protein from Escherichia coli (strain K12).